A 1364-amino-acid chain; its full sequence is MSHSVLVIGSGGREHAICWKLSQSTLVKQIYALPGSFGIQQVEKCRNLDAKVLDPKDFEAIAKWSKKNEISLVVVGPEDPLALGLGDVLQKEGIPCFGPGKQGAQIEADKKWAKDFMLRHGIPTARYESFTDTNKAKAFIRSAPYQALVVKAAGLAAGKGVVVAANVDEACQAVDEILGDLKYGQAGATLVVEELLEGEEISVLAFTDGKSVRAMLPAQDHKRLGNGDTGPNTGGMGAYCPCPLISQPALELVQRAVLERAVQGLIKERITYQGVLYAGLMLTRDGPRVLEFNCRFGDPETQVILPLLETDLFEVMQACCSGQLDRLPLQWRSGVSAVGVVLASAGYPETSTKGCLITGLPDVNSPTQLIFHSGLSVNKQKEALTNGGRVLIAIALDASLKEAAAKATKLAGTITFAGTGAQYRTDIAQKAFKIAIATAPGLSYKDSGVDIDAGDALVQRIKPLSRGTQRPGVLGGLGGFGGLFRLKDLSYKEPVIAEATQGVGAKIQLALQNELYENIGYDLFAMSANDLLELGAEPVAFLDYIACGKLHVPLAAQLVKGMADGCRDAKCALVGGETAEMPSLYAPGQHDMAGYCVGIVEQARVLPRFDLYEPEDLLVGLPSSGLHCAGFNEILTQLAASKVNLKECSPVGGGKHGLSLAQVLGTPTRLYVQQLLPHLQAGNQIKAVAHVTHGLLHDVQRLLPEGFEVTLDFGAVPVPDVFGWLAGQLQLSAQTLLERHNCGIGMVLVLPQSSLLWRTALPGAKVLGVLNRQAKASGGAPRVKVRNFVEQLQKLAAPFGGLGETQLPEEVKDVPSSGVKATTREECFENAVGRRLTRVPNHYVDPILILGTDGVGTKLKIAQQTHRNASVGIDLVAMCVNDILCNGAEPFSFSSYYACGKWQAALAAEVNAGVQEGASQANSSFVASHSAALPLLYEPQVYDLAGFALGIAERSGILPRLDEIQPGDVLIGLPSSGVHSNGFSLVHAVLKRAGLGLNDRAPFSEKTLGEELLVPTKIYVKALSALLSRPNHGIKALAHITGGGLSENIPRVLRKELAVRLDANKYPLPPVFAWLAAAGNISSTELQRTYNCGLGLVLVVGATEVDGVLRELRYPQRASVVGEVVARKDPKKPQVVVQNFEASLARTQRMLSQPRKRVAVLISGKGSNLQALIDAIRDSAQGVYAEIVLVISNKAGVLGLERAAKAGIPSMVISHKDFPSREVYDVELTRHLKTARVEFICLAGFMRILSVPFVREWRGRLINIHPSLLPKFPGLHVQKQALEAGETESGCTVHYVDEGVDTGAIIVQAAVPILPGDDEETLTQRIHYAEHWAFPRALALLASGALRRVSEVKKEAPKDIKDSQ.

The 208-residue stretch at 114–321 (KDFMLRHGIP…LFEVMQACCS (208 aa)) folds into the ATP-grasp domain. 140 to 202 (IRSAPYQALV…EELLEGEEIS (63 aa)) lines the ATP pocket. Residues E291 and N293 each contribute to the Mn(2+) site. Residues 435–1154 (AIATAPGLSY…ARTQRMLSQP (720 aa)) are AIRS. A GART region spans residues 1155–1364 (RKRVAVLISG…EAPKDIKDSQ (210 aa)). 1166–1168 (GSN) contacts N(1)-(5-phospho-beta-D-ribosyl)glycinamide. Residues R1221, 1246 to 1249 (MRIL), and N1263 each bind (6R)-10-formyltetrahydrofolate. The active-site Proton donor is the H1265. 1297–1301 (DEGVD) lines the (6R)-10-formyltetrahydrofolate pocket. 1327-1330 (HYAE) contacts N(1)-(5-phospho-beta-D-ribosyl)glycinamide.

The protein in the N-terminal section; belongs to the GARS family. This sequence in the central section; belongs to the AIR synthase family. It in the C-terminal section; belongs to the GART family.

It catalyses the reaction 5-phospho-beta-D-ribosylamine + glycine + ATP = N(1)-(5-phospho-beta-D-ribosyl)glycinamide + ADP + phosphate + H(+). The enzyme catalyses 2-formamido-N(1)-(5-O-phospho-beta-D-ribosyl)acetamidine + ATP = 5-amino-1-(5-phospho-beta-D-ribosyl)imidazole + ADP + phosphate + H(+). It carries out the reaction N(1)-(5-phospho-beta-D-ribosyl)glycinamide + (6R)-10-formyltetrahydrofolate = N(2)-formyl-N(1)-(5-phospho-beta-D-ribosyl)glycinamide + (6S)-5,6,7,8-tetrahydrofolate + H(+). It participates in purine metabolism; IMP biosynthesis via de novo pathway; 5-amino-1-(5-phospho-D-ribosyl)imidazole from N(2)-formyl-N(1)-(5-phospho-D-ribosyl)glycinamide: step 2/2. It functions in the pathway purine metabolism; IMP biosynthesis via de novo pathway; N(1)-(5-phospho-D-ribosyl)glycinamide from 5-phospho-alpha-D-ribose 1-diphosphate: step 2/2. The protein operates within purine metabolism; IMP biosynthesis via de novo pathway; N(2)-formyl-N(1)-(5-phospho-D-ribosyl)glycinamide from N(1)-(5-phospho-D-ribosyl)glycinamide (10-formyl THF route): step 1/1. In terms of biological role, trifunctional enzyme required for de novo purine biosynthesis. This Drosophila pseudoobscura pseudoobscura (Fruit fly) protein is Trifunctional purine biosynthetic protein adenosine-3 (ade3).